Consider the following 304-residue polypeptide: Non-specific ribonucleoside hydrolase RihC (304 aa).

The active site involves His233.

It belongs to the IUNH family. RihC subfamily.

Hydrolyzes both purine and pyrimidine ribonucleosides with a broad-substrate specificity. In Escherichia coli O6:H1 (strain CFT073 / ATCC 700928 / UPEC), this protein is Non-specific ribonucleoside hydrolase RihC.